The following is a 561-amino-acid chain: 3-hydroxy-3-methylglutaryl-coenzyme A reductase 3 (561 aa).

A run of 2 helical transmembrane segments spans residues 25 to 45 and 69 to 89; these read PIRH…AYLM and IFGL…AFVQ. Residues 90-145 form a linker region; sequence SIVSSSDDEEEDFLVGPARGSSAAAAVAPPPPPSSPAQCSLLGSPHDDAARERMPE. A disordered region spans residues 113 to 146; the sequence is AAAVAPPPPPSSPAQCSLLGSPHDDAARERMPEE. Over residues 134–143 the composition is skewed to basic and acidic residues; that stretch reads PHDDAARERM. The segment at 146–561 is catalytic; sequence EDEEIVSSVV…SSKDMSKVIS (416 aa). E240 serves as the catalytic Charge relay system. N304 carries an N-linked (GlcNAc...) asparagine glycan. Residues K372 and D448 each act as charge relay system in the active site. The active-site Proton donor is the H546. N550 carries N-linked (GlcNAc...) asparagine glycosylation.

This sequence belongs to the HMG-CoA reductase family.

It is found in the endoplasmic reticulum membrane. The enzyme catalyses (R)-mevalonate + 2 NADP(+) + CoA = (3S)-3-hydroxy-3-methylglutaryl-CoA + 2 NADPH + 2 H(+). The protein operates within metabolic intermediate biosynthesis; (R)-mevalonate biosynthesis; (R)-mevalonate from acetyl-CoA: step 3/3. Catalyzes the synthesis of mevalonate. The specific precursor of all isoprenoid compounds present in plants. This Oryza sativa subsp. japonica (Rice) protein is 3-hydroxy-3-methylglutaryl-coenzyme A reductase 3 (HMG3).